Reading from the N-terminus, the 89-residue chain is Long neurotoxin homolog Pa ID (89 aa).

Positions 1–21 are cleaved as a signal peptide; it reads MKTLLLTLVVVTIMCLDLGYT. Disulfide bonds link cysteine 24/cysteine 42, cysteine 35/cysteine 63, cysteine 48/cysteine 52, cysteine 67/cysteine 78, and cysteine 79/cysteine 84.

The protein belongs to the three-finger toxin family. Long-chain subfamily. Type II alpha-neurotoxin sub-subfamily. As to expression, expressed by the venom gland.

The protein localises to the secreted. Its function is as follows. Binds with high affinity to muscular (alpha-1/CHRNA1) and neuronal (alpha-7/CHRNA7) nicotinic acetylcholine receptor (nAChR) and inhibits acetylcholine from binding to the receptor, thereby impairing neuromuscular and neuronal transmission. The polypeptide is Long neurotoxin homolog Pa ID (Pseudechis australis (Mulga snake)).